A 527-amino-acid chain; its full sequence is uncharacterized protein (527 aa).

The PE domain occupies M1–T93. 3 stretches are compositionally biased toward gly residues: residues I264 to G286, G292 to G384, and N472 to R515. Disordered stretches follow at residues I264 to G384 and N472 to Q527.

Belongs to the mycobacterial PE family. PGRS subfamily.

This is an uncharacterized protein from Mycobacterium tuberculosis (strain CDC 1551 / Oshkosh).